The chain runs to 570 residues: Nucleoprotein (570 aa).

The interval 54–241 is binding site for the cap structure m7GTP; that stretch reads MRKQKRDDGD…IDTKKSSLNI (188 aa). Positions 390 and 392 each coordinate Mn(2+). Positions 400, 507, 510, and 530 each coordinate Zn(2+). Residue aspartate 534 coordinates Mn(2+).

It belongs to the arenaviridae nucleocapsid protein family. In terms of assembly, homomultimerizes to form the nucleocapsid. Binds to viral genomic RNA. Interacts with glycoprotein G2. Interacts with protein Z; this interaction probably directs the encapsidated genome to budding sites. Interacts with protein L; this interaction does not interfere with Z-L interaction. Interacts with host IKBKE (via Protein kinase domain); the interaction inhibits IKBKE kinase activity.

It is found in the virion. The protein localises to the host cytoplasm. Its function is as follows. Encapsidates the genome, protecting it from nucleases. The encapsidated genomic RNA is termed the nucleocapsid (NC). Serves as template for viral transcription and replication. The increased presence of protein N in host cell does not seem to trigger the switch from transcription to replication as observed in other negative strain RNA viruses. Through the interaction with host IKBKE, strongly inhibits the phosphorylation and nuclear translocation of host IRF3, a protein involved in interferon activation pathway, leading to the inhibition of interferon-beta and IRF3-dependent promoters activation. Also encodes a functional 3'-5' exoribonuclease that degrades preferentially dsRNA substrates and thereby participates in the suppression of interferon induction. The protein is Nucleoprotein of Homo sapiens (Human).